Reading from the N-terminus, the 326-residue chain is D-alanine--D-alanine ligase (326 aa).

The 200-residue stretch at 114 to 313 (KRVWLQHGLR…YAELCVSIVS (200 aa)) folds into the ATP-grasp domain. 140–195 (PDRLGLPLILKPPHEGSTVGITKVAGYSDMKEGYAQAAKFDDEVLAEQFIAGRELT) serves as a coordination point for ATP. Mg(2+) contacts are provided by Asp-267, Glu-280, and Asn-282.

It belongs to the D-alanine--D-alanine ligase family. Mg(2+) serves as cofactor. Requires Mn(2+) as cofactor.

The protein resides in the cytoplasm. The catalysed reaction is 2 D-alanine + ATP = D-alanyl-D-alanine + ADP + phosphate + H(+). The protein operates within cell wall biogenesis; peptidoglycan biosynthesis. In terms of biological role, cell wall formation. This Bordetella petrii (strain ATCC BAA-461 / DSM 12804 / CCUG 43448) protein is D-alanine--D-alanine ligase.